Here is an 80-residue protein sequence, read N- to C-terminus: MKPEIHPTYQKVVFMDTSTGFKFLTGSTRGSSETIEWEDGNTYPLIKVEISSDSHPFYTGKQKLADAGGRVDRFKKKYNL.

It belongs to the bacterial ribosomal protein bL31 family. Type B subfamily. Part of the 50S ribosomal subunit.

This chain is Large ribosomal subunit protein bL31B, found in Shouchella clausii (strain KSM-K16) (Alkalihalobacillus clausii).